A 281-amino-acid polypeptide reads, in one-letter code: Cytochrome c oxidase subunit 3 (281 aa).

The next 7 membrane-spanning stretches (helical) occupy residues 34-54 (PWPI…VMTF), 59-79 (NGLF…TLWF), 103-123 (GFVL…WAFF), 148-168 (WEVP…VTYA), 179-199 (VIYG…FQGF), 220-240 (ATGF…VGLF), and 259-279 (ILYW…VYWW).

This sequence belongs to the cytochrome c oxidase subunit 3 family. As to quaternary structure, component of the cytochrome c oxidase (complex IV, CIV), a multisubunit enzyme composed of a catalytic core of 3 subunits and several supernumerary subunits. The complex exists as a monomer or a dimer and forms supercomplexes (SCs) in the inner mitochondrial membrane with ubiquinol-cytochrome c oxidoreductase (cytochrome b-c1 complex, complex III, CIII).

The protein localises to the mitochondrion inner membrane. It carries out the reaction 4 Fe(II)-[cytochrome c] + O2 + 8 H(+)(in) = 4 Fe(III)-[cytochrome c] + 2 H2O + 4 H(+)(out). Functionally, component of the cytochrome c oxidase, the last enzyme in the mitochondrial electron transport chain which drives oxidative phosphorylation. The respiratory chain contains 3 multisubunit complexes succinate dehydrogenase (complex II, CII), ubiquinol-cytochrome c oxidoreductase (cytochrome b-c1 complex, complex III, CIII) and cytochrome c oxidase (complex IV, CIV), that cooperate to transfer electrons derived from NADH and succinate to molecular oxygen, creating an electrochemical gradient over the inner membrane that drives transmembrane transport and the ATP synthase. Cytochrome c oxidase is the component of the respiratory chain that catalyzes the reduction of oxygen to water. Electrons originating from reduced cytochrome c in the intermembrane space (IMS) are transferred via the dinuclear copper A center (CU(A)) of subunit 2 and heme A of subunit 1 to the active site in subunit 1, a binuclear center (BNC) formed by heme A3 and copper B (CU(B)). The BNC reduces molecular oxygen to 2 water molecules using 4 electrons from cytochrome c in the IMS and 4 protons from the mitochondrial matrix. This chain is Cytochrome c oxidase subunit 3 (COX3), found in Rhizopus stolonifer (Rhizopus nigricans).